Reading from the N-terminus, the 255-residue chain is NAD kinase (255 aa).

The active-site Proton acceptor is Asp-44. Residues 44 to 45 (DG), His-49, 114 to 115 (NE), Asp-144, Ala-152, 155 to 160 (SAYNLS), and Gln-216 each bind NAD(+).

Belongs to the NAD kinase family. The cofactor is a divalent metal cation.

Its subcellular location is the cytoplasm. The catalysed reaction is NAD(+) + ATP = ADP + NADP(+) + H(+). Involved in the regulation of the intracellular balance of NAD and NADP, and is a key enzyme in the biosynthesis of NADP. Catalyzes specifically the phosphorylation on 2'-hydroxyl of the adenosine moiety of NAD to yield NADP. The polypeptide is NAD kinase (Rickettsia bellii (strain OSU 85-389)).